The primary structure comprises 161 residues: Epoxidase gkaX (161 aa).

The first 18 residues, 1-18, serve as a signal peptide directing secretion; it reads MSLSTSLRLLRLLPAISS. N-linked (GlcNAc...) asparagine glycosylation occurs at Asn-45. Transmembrane regions (helical) follow at residues 59–79, 92–112, and 139–159; these read WQWILIIGYPLNYLFGILNLV, IWYVLGLFFSVGHMLFVKMAL, and WVRALITDLPAWICWIMAAVS.

The protein belongs to the epoxidase xenD family.

The protein localises to the membrane. Its pathway is mycotoxin biosynthesis. Its function is as follows. Epoxidase; part of the gene cluster that mediates the biosynthesis of GKK1032, fungal natural products containing a macrocyclic para-cyclophane connected to a decahydrofluorene ring system that show potent antitumor activities. Within the pathway, gkaX functions synergistically with gkaB and gkaZ to form the cyclophane. The pathway begins with the PKS-NRPS gkaA which, with the help of the trans-enoyl reductase gkaC, synthesizes the polyketide-tyrosyl acyl thioester product which can be reductively off-loaded by the terminal reductase (R) domain in gkaA. The alpha/beta hydrolase gkaG is then required to catalyze the subsequent Knoevenagel condensation that affords the 3-pyrrolin-2-one ring, whereas the three proteins gkaB, gkaX and gkaZ then function synergistically to form the cyclophane. This chain is Epoxidase gkaX, found in Penicillium citrinum.